A 600-amino-acid polypeptide reads, in one-letter code: Putative acetyltransferase MPN_114 (600 aa).

The active-site Proton acceptor is the His-323. A CoA-binding site is contributed by 396–409 (TKPLIKAKGIKNSE).

Belongs to the carnitine/choline acetyltransferase family.

The sequence is that of Putative acetyltransferase MPN_114 from Mycoplasma pneumoniae (strain ATCC 29342 / M129 / Subtype 1) (Mycoplasmoides pneumoniae).